The sequence spans 368 residues: uncharacterized protein (368 aa).

It belongs to the CdaR family.

This is an uncharacterized protein from Haemophilus influenzae (strain ATCC 51907 / DSM 11121 / KW20 / Rd).